The chain runs to 325 residues: Plasminogen (325 aa).

2 Kringle domains span residues 80–146 and 159–217; these read ACVK…VPSC and LTPA…VLSV. 4 disulfides stabilise this stretch: cysteine 81–cysteine 146, cysteine 102–cysteine 135, cysteine 124–cysteine 141, and cysteine 188–cysteine 212.

Belongs to the peptidase S1 family. Plasminogen subfamily.

The protein localises to the secreted. It catalyses the reaction Preferential cleavage: Lys-|-Xaa &gt; Arg-|-Xaa, higher selectivity than trypsin. Converts fibrin into soluble products.. Plasmin dissolves the fibrin of blood clots and acts as a proteolytic factor in a variety of other processes including embryonic development, tissue remodeling, tumor invasion, and inflammation. This is Plasminogen from Petromyzon marinus (Sea lamprey).